Here is a 329-residue protein sequence, read N- to C-terminus: Phosphate import ATP-binding protein PstB (329 aa).

Residues 83–325 enclose the ABC transporter domain; that stretch reads FEIENLNFWY…PKQKETNRYI (243 aa). 116-123 contributes to the ATP binding site; the sequence is GKSGCGKS.

Belongs to the ABC transporter superfamily. Phosphate importer (TC 3.A.1.7) family. As to quaternary structure, the complex is composed of two ATP-binding proteins (PstB), two transmembrane proteins (PstC and PstA) and a solute-binding protein (PstS).

The protein localises to the cell membrane. The enzyme catalyses phosphate(out) + ATP + H2O = ADP + 2 phosphate(in) + H(+). Its function is as follows. Part of the ABC transporter complex PstSACB involved in phosphate import. Responsible for energy coupling to the transport system. The chain is Phosphate import ATP-binding protein PstB from Mycoplasma pneumoniae (strain ATCC 29342 / M129 / Subtype 1) (Mycoplasmoides pneumoniae).